Consider the following 348-residue polypeptide: Isopentenyl-diphosphate delta-isomerase (348 aa).

Position 11–12 (11–12 (RK)) interacts with substrate. Residues 70–72 (AMT), Ser-100, and Asn-131 each bind FMN. 100-102 (SQR) serves as a coordination point for substrate. Gln-165 serves as a coordination point for substrate. Glu-166 contacts Mg(2+). FMN is bound by residues Lys-197, Thr-231, 278–280 (GIR), and 299–300 (AR).

It belongs to the IPP isomerase type 2 family. As to quaternary structure, homooctamer. Dimer of tetramers. FMN is required as a cofactor. The cofactor is NADPH. Mg(2+) serves as cofactor.

Its subcellular location is the cytoplasm. It catalyses the reaction isopentenyl diphosphate = dimethylallyl diphosphate. Functionally, involved in the biosynthesis of isoprenoids. Catalyzes the 1,3-allylic rearrangement of the homoallylic substrate isopentenyl (IPP) to its allylic isomer, dimethylallyl diphosphate (DMAPP). The protein is Isopentenyl-diphosphate delta-isomerase of Mycobacterium marinum (strain ATCC BAA-535 / M).